We begin with the raw amino-acid sequence, 378 residues long: Branched-chain-amino-acid aminotransferase (378 aa).

Lys213 carries the post-translational modification N6-(pyridoxal phosphate)lysine.

It belongs to the class-IV pyridoxal-phosphate-dependent aminotransferase family. As to quaternary structure, homodimer. The cofactor is pyridoxal 5'-phosphate.

The catalysed reaction is L-leucine + 2-oxoglutarate = 4-methyl-2-oxopentanoate + L-glutamate. It catalyses the reaction L-isoleucine + 2-oxoglutarate = (S)-3-methyl-2-oxopentanoate + L-glutamate. It carries out the reaction L-valine + 2-oxoglutarate = 3-methyl-2-oxobutanoate + L-glutamate. In terms of biological role, catalyzes the first reaction in the catabolism of the essential branched chain amino acids leucine, isoleucine, and valine. In Dictyostelium discoideum (Social amoeba), this protein is Branched-chain-amino-acid aminotransferase (bcaA).